Here is a 245-residue protein sequence, read N- to C-terminus: Tegument protein UL51 homolog (245 aa).

Residue C10 is the site of S-palmitoyl cysteine; by host attachment. Residues 225 to 245 (PVKSNLKSKHKPKRKASLVAV) form a disordered region. A compositionally biased stretch (basic residues) spans 230 to 245 (LKSKHKPKRKASLVAV).

Belongs to the herpesviridae UL51 family. In terms of assembly, oligomerizes. Interacts with ORF55; this interaction mediates ORF55 incorporation to virions. Phosphorylated. Post-translationally, palmitoylation is necessary for Golgi localization.

It is found in the virion tegument. The protein localises to the host cytoplasm. It localises to the host Golgi apparatus. In terms of biological role, plays several roles during the time course of infection, including egress of virus particles from the perinuclear space and secondary envelopment of cytoplasmic capsids that bud into specific trans-Golgi network (TGN)-derived membranes. The sequence is that of Tegument protein UL51 homolog from Equine herpesvirus 1 (strain Ab4p) (EHV-1).